Reading from the N-terminus, the 611-residue chain is 4-hydroxy-3-methylbut-2-en-1-yl diphosphate synthase (flavodoxin) (611 aa).

4 residues coordinate [4Fe-4S] cluster: Cys-520, Cys-523, Cys-554, and Glu-561.

It belongs to the IspG family. [4Fe-4S] cluster serves as cofactor.

It catalyses the reaction (2E)-4-hydroxy-3-methylbut-2-enyl diphosphate + oxidized [flavodoxin] + H2O + 2 H(+) = 2-C-methyl-D-erythritol 2,4-cyclic diphosphate + reduced [flavodoxin]. It participates in isoprenoid biosynthesis; isopentenyl diphosphate biosynthesis via DXP pathway; isopentenyl diphosphate from 1-deoxy-D-xylulose 5-phosphate: step 5/6. In terms of biological role, converts 2C-methyl-D-erythritol 2,4-cyclodiphosphate (ME-2,4cPP) into 1-hydroxy-2-methyl-2-(E)-butenyl 4-diphosphate. The chain is 4-hydroxy-3-methylbut-2-en-1-yl diphosphate synthase (flavodoxin) from Parabacteroides distasonis (strain ATCC 8503 / DSM 20701 / CIP 104284 / JCM 5825 / NCTC 11152).